Consider the following 178-residue polypeptide: Zinc finger protein ZAT11 (178 aa).

2 consecutive C2H2-type zinc fingers follow at residues 47-69 (FECKTCNKRFSSFQALGGHRASH) and 94-116 (HKCSICSQSFGTGQALGGHMRRH).

In terms of tissue distribution, expressed in leaves.

It is found in the nucleus. Probable transcription factor that may be involved in stress responses. In Arabidopsis thaliana (Mouse-ear cress), this protein is Zinc finger protein ZAT11 (ZAT11).